The sequence spans 452 residues: Cysteine--tRNA ligase (452 aa).

Position 27 (Cys-27) interacts with Zn(2+). Positions 29-39 (PTVQDHFHIGH) match the 'HIGH' region motif. Zn(2+)-binding residues include Asp-207, His-232, and Glu-236. The 'KMSKS' region motif lies at 265-269 (KMSKS). Lys-268 is an ATP binding site.

This sequence belongs to the class-I aminoacyl-tRNA synthetase family. The cofactor is Zn(2+).

The protein localises to the cytoplasm. It catalyses the reaction tRNA(Cys) + L-cysteine + ATP = L-cysteinyl-tRNA(Cys) + AMP + diphosphate. This chain is Cysteine--tRNA ligase, found in Thermoplasma acidophilum (strain ATCC 25905 / DSM 1728 / JCM 9062 / NBRC 15155 / AMRC-C165).